Reading from the N-terminus, the 1016-residue chain is DENN domain-containing protein 1A (1016 aa).

The uDENN domain occupies 13–145; that stretch reads FEVYVEVAYP…HRLPIPDPGV (133 aa). Positions 162–298 constitute a cDENN domain; it reads ELPSIPENRN…VISSLKNRLK (137 aa). The dDENN domain maps to 300–378; sequence VSTTTGDGVA…DGRLDLLNSG (79 aa). The FXDXF motif signature appears at 381 to 385; the sequence is FSDVF. The tract at residues 453 to 565 is disordered; that stretch reads DITENGCVSS…GPTPAPPDRA (113 aa). The residue at position 473 (S473) is a Phosphoserine. Positions 479–489 are enriched in basic and acidic residues; it reads QDPRLREDRRP. Positions 500–509 are enriched in basic residues; it reads PRPHVVRRPK. T519 is modified (phosphothreonine). Residues S520, S522, S523, S536, S538, and S546 each carry the phosphoserine modification. A Clathrin box motif is present at residues 569–578; sequence DLLEDVFSSL. Phosphoserine is present on S592. The interval 681-737 is disordered; that stretch reads LSPSIKEETPIPTPGSITIPRPQGRKTPELGIVPPPPTARPAKLQAAGGPLGDFSSE. A Phosphoserine modification is found at S750. R760 is modified (omega-N-methylarginine). 2 disordered regions span residues 763 to 783 and 935 to 1016; these read PQGPTELLQPPSPAPGAAGTG and SARA…ETFE. Residues 954-970 are compositionally biased toward pro residues; the sequence is LLPPRPPQSLQPTPQPS. 2 stretches are compositionally biased toward basic and acidic residues: residues 977 to 988 and 1007 to 1016; these read DPFEDLLRKTKQ and QLRRQWETFE.

Interacts with RAB35. Interacts with clathrin and with the adapter protein complex 2, AP-2. Interacts with ITSN1 and SH3GL2. Interacts (when phosphorylated) with YWHAE. Post-translationally, phosphorylated on serine and/or threonine in an Akt-dependent manner. Phosphorylation probably regulates the guanine nucleotide exchange factor (GEF) activity, possibly by disrupting an intramolecular interaction between the DENN domain and the C-terminus of the protein, thereby relieving the autoinhibition.

Its subcellular location is the cytoplasmic vesicle. The protein localises to the clathrin-coated vesicle membrane. It is found in the presynaptic cell membrane. The guanine nucleotide exchange factor (GEF) activity is autoinhibited. Autoinhibition may be the result of intramolecular interaction between the DENN domain and the C-terminus, which is disrupted upon phosphorylation. Activation is regulated by Akt activation. Guanine nucleotide exchange factor (GEF) regulating clathrin-mediated endocytosis through RAB35 activation. Promotes the exchange of GDP to GTP, converting inactive GDP-bound RAB35 into its active GTP-bound form. Regulates clathrin-mediated endocytosis of synaptic vesicles and mediates exit from early endosomes. Binds phosphatidylinositol-phosphates (PtdInsPs), with some preference for PtdIns(3)P. This chain is DENN domain-containing protein 1A (Dennd1a), found in Mus musculus (Mouse).